Consider the following 360-residue polypeptide: DNA replication and repair protein RecF (360 aa).

G30 to T37 lines the ATP pocket.

This sequence belongs to the RecF family.

It localises to the cytoplasm. Functionally, the RecF protein is involved in DNA metabolism; it is required for DNA replication and normal SOS inducibility. RecF binds preferentially to single-stranded, linear DNA. It also seems to bind ATP. This chain is DNA replication and repair protein RecF, found in Shewanella sp. (strain MR-4).